An 843-amino-acid polypeptide reads, in one-letter code: Urease (843 aa).

Residues 400–843 (GGIDCHVHFI…VPLSRNYFLF (444 aa)) enclose the Urease domain. His405, His407, and Lys488 together coordinate Ni(2+). Position 488 is an N6-carboxylysine (Lys488). Residue His490 coordinates substrate. Ni(2+) contacts are provided by His517 and His543. The active-site Proton donor is His591. Asp631 is a binding site for Ni(2+).

The protein in the C-terminal section; belongs to the metallo-dependent hydrolases superfamily. Urease alpha subunit family. In terms of assembly, homohexamer. Other oligomeric forms may exist depending on pH and presence of salts. Ni(2+) is required as a cofactor. Post-translationally, carboxylation allows a single lysine to coordinate two nickel ions.

The catalysed reaction is urea + 2 H2O + H(+) = hydrogencarbonate + 2 NH4(+). Its pathway is nitrogen metabolism; urea degradation; CO(2) and NH(3) from urea (urease route): step 1/1. In terms of biological role, urea hydrolase involved in nitrogen recycling from ureide, purine, and arginine catabolism. This is Urease from Oryza sativa subsp. indica (Rice).